Consider the following 188-residue polypeptide: ATP synthase subunit p18, mitochondrial (188 aa).

The transit peptide at 1–18 directs the protein to the mitochondrion; sequence MMRRVYSPVFCSVAAARF. PPR repeat units follow at residues 36-70, 75-109, and 116-146; these read TNTAPWIEKIKKCKYYDEAGEVLVNMNVSNCPPDI, ATLQCIYQSPSKQSTPVDNESKFCAMMDLLEEMQH, and NEESWTWVMKECVKSGQFRLGYCIQQVMETE.

F-type ATPases have 2 components, F(1) - the catalytic core - and F(o) - the membrane proton channel. F(1) has five subunits: alpha(3), beta(3), gamma(1), delta(1), epsilon(1), plus the additional subunit P18 (Tb427.05.1710) that is not present in F(1)F(o) ATP synthase from metazoa. Subunit P18 (Tb927.5.1710) interacts with the alpha subunit with a 1:1 stoichiometry; the interaction is direct. Subunit gamma is part of the central stalk. F(o) has three main subunits: a, b and c. The trypanosomal ATPase complex contains additional subunits that are not present in the F(1)F(o) ATP synthase from metazoa.

It is found in the mitochondrion. The protein localises to the mitochondrion inner membrane. Mitochondrial membrane ATP synthase (F(1)F(o) ATP synthase) produces ATP from ADP in the presence of a proton gradient across the membrane which is generated by electron transport complexes of the respiratory chain. F-type ATPases consist of two structural domains, F(1) - containing the extramembraneous catalytic core, and F(o) - containing the membrane proton channel, linked together by a central stalk and a peripheral stalk. During catalysis, ATP synthesis in the catalytic domain of F(1) is coupled via a rotary mechanism of the central stalk subunits to proton translocation. Subunits alpha and beta form the catalytic core in F(1). Rotation of the central stalk against the surrounding alpha(3)beta(3) subunits leads to hydrolysis of ATP in three separate catalytic sites on the beta subunits. Contrary to the procyclic, insect form that requires F(1)F(o) ATP synthase for ATP synthesis, the bloodstream form relies on ATP hydrolysis by F(1)F(o) ATP synthase to maintain its mitochondrial membrane potential. This chain is ATP synthase subunit p18, mitochondrial, found in Trypanosoma brucei brucei.